Reading from the N-terminus, the 221-residue chain is Glutathione peroxidase (221 aa).

Positions 1–19 (MFIQLLILSYAILLQLIAT) are cleaved as a signal peptide. Residue N28 is glycosylated (N-linked (GlcNAc...) asparagine). Residue C72 is part of the active site. N87 and N90 each carry an N-linked (GlcNAc...) asparagine glycan.

Belongs to the glutathione peroxidase family. As to quaternary structure, homotetramer.

Its subcellular location is the secreted. The protein localises to the extracellular space. The catalysed reaction is 2 glutathione + H2O2 = glutathione disulfide + 2 H2O. This Dirofilaria immitis (Canine heartworm) protein is Glutathione peroxidase.